Reading from the N-terminus, the 156-residue chain is Holliday junction resolvase (156 aa).

It belongs to the RuvC family. Poxviruses-type subfamily. Mg(2+) serves as cofactor.

In terms of biological role, nuclease that specifically cleaves and resolves four-way DNA Holliday junctions into linear duplex products. The sequence is that of Holliday junction resolvase from Vertebrata (FPV).